The chain runs to 282 residues: Pantothenate synthetase (282 aa).

Position 26–33 (26–33 (MGNLHEGH)) interacts with ATP. The active-site Proton donor is the His33. Residue Gln57 participates in (R)-pantoate binding. Residue Gln57 coordinates beta-alanine. 144–147 (GKKD) is an ATP binding site. A (R)-pantoate-binding site is contributed by Gln150. Residues Ile173 and 181–184 (LSSR) each bind ATP.

The protein belongs to the pantothenate synthetase family. Homodimer.

The protein localises to the cytoplasm. The enzyme catalyses (R)-pantoate + beta-alanine + ATP = (R)-pantothenate + AMP + diphosphate + H(+). Its pathway is cofactor biosynthesis; (R)-pantothenate biosynthesis; (R)-pantothenate from (R)-pantoate and beta-alanine: step 1/1. In terms of biological role, catalyzes the condensation of pantoate with beta-alanine in an ATP-dependent reaction via a pantoyl-adenylate intermediate. In Cupriavidus necator (strain ATCC 17699 / DSM 428 / KCTC 22496 / NCIMB 10442 / H16 / Stanier 337) (Ralstonia eutropha), this protein is Pantothenate synthetase.